The sequence spans 566 residues: MGRAGGGGPGRGPPPLLLFLGAALVLASGAVPAREAGSAVEAEELVKGSPAWEPPANDTREEAGPPAAGEDEASWTAPGGELAGPEEVLQESAAVTGTAWLEADSPGLGGVTAEAGSGDAQALPATLQAPHEVLGQSIMPPAIPEATEASGPPSPTPGDKLSPASELPKESPLEVWLNLGGSTPDPQGPELTYPFQGTLEPQPASDIIDIDYFEGLDGEGRGADLGSFPGSPGTSENHPDTEGETPSWSLLDLYDDFTPFDESDFYPTTSFYDDLDEEEEEEEDDKDAVGGGDLEDENELLVPTGKPGLGPGTGQPTSRWHAVPPQHTLGSVPGSSIALRPRPGEPGRDLASSENGTECRSGFVRHNGSCRSVCDLFPSYCHNGGQCYLVENIGAFCRCNTQDYIWHKGMRCESIITDFQVMCVAVGSAALVLLLLFMMTVFFAKKLYLLKTENTKLRRTNKFRTPSELHNDNFSLSTIAEGSHPNVRKLCNTPRTSSPHARALAHYDNVICQDDPSAPHKIQEVLKSCLKEEESFNIQNSMSPKLEGGKGDQADLDVNCLQNNLT.

The N-terminal stretch at Met1–Ala30 is a signal peptide. At Val31–Cys423 the chain is on the extracellular side. A glycan (O-linked (Xyl...) (chondroitin sulfate) serine) is linked at Ser38. Residues Ala39–Leu82 are disordered. Asn57 carries an N-linked (GlcNAc...) asparagine glycan. O-linked (Xyl...) (chondroitin sulfate) serine glycosylation is present at Ser117. Disordered regions lie at residues Ile143–Gln202, Gly215–Trp248, and Glu262–Glu354. O-linked (GalNAc...) serine glycosylation is present at Ser165. The tract at residues Asp264 to Leu301 is interaction with TNC and TNR. Acidic residues predominate over residues Asp273–Lys286. The region spanning Arg371–Glu413 is the EGF-like domain. Intrachain disulfides connect Cys374–Cys387, Cys381–Cys397, and Cys399–Cys412. A helical transmembrane segment spans residues Val424–Ala444. The segment at Phe442–Thr460 is interaction with GOPC. Residues Lys445 to Thr566 lie on the Cytoplasmic side of the membrane. Residues Ser467, Ser475, Ser483, and Ser543 each carry the phosphoserine modification.

Binds TNR and probably TNC. Interacts with ERBB3 and GOPC. Interacts with MDK; this interaction is independent of the presence of chondroitin sulfate chains and promotes elongation of oligodendroglial precursor-like cells. In terms of processing, N-glycosylated. Post-translationally, O-glycosylated; contains chondroitin sulfate glycans. Part-time proteoglycan, expressed in part as a proteoglycan exhibiting chondroitin sulfate glycans and in part as a non-proteoglycan form. The relative amount of both forms depends on tissues and tissue maturation. Phosphorylated; in intracellular and extracellular parts. As to expression, detected in cerebrospinal fluid (at protein level). Detected in urine (at protein level). Expressed in brain (at protein level).

Its subcellular location is the cell membrane. It localises to the synaptic cell membrane. It is found in the endoplasmic reticulum membrane. The protein localises to the golgi apparatus membrane. The protein resides in the cell surface. Its subcellular location is the secreted. May function as a growth and differentiation factor involved in neuritogenesis. May induce ERBB3 activation. In Homo sapiens (Human), this protein is Chondroitin sulfate proteoglycan 5 (CSPG5).